The sequence spans 189 residues: Inner membrane-spanning protein YciB (189 aa).

5 helical membrane passes run 23 to 43 (ILLATLVLIPATLAQVAFVWW), 54 to 74 (ITLALVVVMGGATVIFHDAAF), 82 to 102 (VNWLFAFAFLVAPLFGGKTLI), 120 to 140 (LNLAWVAFFIALGAINVYVFK), and 150 to 170 (FKLFGMLGLTLLFVLGQGVYL).

The protein belongs to the YciB family.

The protein localises to the cell inner membrane. Plays a role in cell envelope biogenesis, maintenance of cell envelope integrity and membrane homeostasis. This chain is Inner membrane-spanning protein YciB, found in Chromohalobacter salexigens (strain ATCC BAA-138 / DSM 3043 / CIP 106854 / NCIMB 13768 / 1H11).